The sequence spans 247 residues: Ras-like protein family member 11B (247 aa).

The segment at 28–245 (AGRRLVKIAV…ALSAKVRTVT (218 aa)) is small GTPase-like. Residues 39 to 46 (GASGVGKT), 86 to 93 (DTPGIQVH), and 151 to 154 (NKAD) contribute to the GTP site. Residues 202–228 (PKQQPSSTPEKRRTSLIPRPKSPNMQD) are disordered.

Belongs to the small GTPase superfamily. Ras family.

The catalysed reaction is GTP + H2O = GDP + phosphate + H(+). This chain is Ras-like protein family member 11B, found in Mus musculus (Mouse).